The following is a 252-amino-acid chain: D-aminoacyl-tRNA deacylase (252 aa).

The protein belongs to the DtdA deacylase family. As to quaternary structure, monomer. Zn(2+) is required as a cofactor.

It catalyses the reaction a D-aminoacyl-tRNA + H2O = a tRNA + a D-alpha-amino acid + H(+). The enzyme catalyses glycyl-tRNA(Ala) + H2O = tRNA(Ala) + glycine + H(+). In terms of biological role, D-aminoacyl-tRNA deacylase with broad substrate specificity. By recycling D-aminoacyl-tRNA to D-amino acids and free tRNA molecules, this enzyme counteracts the toxicity associated with the formation of D-aminoacyl-tRNA entities in vivo. This chain is D-aminoacyl-tRNA deacylase, found in Pyrobaculum neutrophilum (strain DSM 2338 / JCM 9278 / NBRC 100436 / V24Sta) (Thermoproteus neutrophilus).